The chain runs to 185 residues: Threonylcarbamoyl-AMP synthase (185 aa).

Positions 5 to 185 (NWRVRLAARI…RDGRTGQRLR (181 aa)) constitute a YrdC-like domain.

It belongs to the SUA5 family. TsaC subfamily.

The protein localises to the cytoplasm. The enzyme catalyses L-threonine + hydrogencarbonate + ATP = L-threonylcarbamoyladenylate + diphosphate + H2O. Functionally, required for the formation of a threonylcarbamoyl group on adenosine at position 37 (t(6)A37) in tRNAs that read codons beginning with adenine. Catalyzes the conversion of L-threonine, HCO(3)(-)/CO(2) and ATP to give threonylcarbamoyl-AMP (TC-AMP) as the acyladenylate intermediate, with the release of diphosphate. The protein is Threonylcarbamoyl-AMP synthase of Nitrosococcus oceani (strain ATCC 19707 / BCRC 17464 / JCM 30415 / NCIMB 11848 / C-107).